The primary structure comprises 1713 residues: Cell wall protein AWA1 (1713 aa).

Positions 1–23 (MFNRFNKLQAALALVLYSQSALG) are cleaved as a signal peptide. N-linked (GlcNAc...) asparagine glycosylation is present at asparagine 34. Disordered regions lie at residues 80-117 (IAPSTSSSEVSSSITSSGSSVSGSSSITSSGSSVSSSS), 256-327 (TSTT…AESI), and 359-939 (SSGI…STAS). Positions 256–275 (TSTTSDTYISSSSPSQVTSS) are enriched in low complexity. 2 stretches are compositionally biased toward polar residues: residues 276–327 (AEPT…AESI) and 359–368 (SSGISSSVEP). Positions 374-939 (PSSDESISST…QSTSSASTAS (566 aa)) are enriched in low complexity. Asparagine 1133, asparagine 1241, and asparagine 1278 each carry an N-linked (GlcNAc...) asparagine glycan. The interval 1582-1603 (KTVTSEAPKETSETSETSAAPK) is disordered. The GPI-anchor amidated alanine moiety is linked to residue alanine 1692. Residues 1693 to 1713 (AGLNANTLNALVGIFVLAFFN) constitute a propeptide, removed in mature form.

This sequence belongs to the SRP1/TIP1 family. Post-translationally, the GPI-anchor is attached to the protein in the endoplasmic reticulum and serves to target the protein to the cell surface. There, the glucosamine-inositol phospholipid moiety is cleaved off and the GPI-modified mannoprotein is covalently attached via its lipidless GPI glycan remnant to the 1,6-beta-glucan of the outer cell wall layer.

The protein resides in the secreted. It localises to the cell wall. It is found in the membrane. Its function is as follows. Involved in cell wall organization and biosynthesis. Confers cell surface hydrophobicity (CSH). In Saccharomyces cerevisiae (strain Kyokai no. 7 / NBRC 101557) (Baker's yeast), this protein is Cell wall protein AWA1 (AWA1).